The chain runs to 332 residues: Glycerol-3-phosphate dehydrogenase [NAD(P)+] (332 aa).

Trp11, Arg30, and Lys108 together coordinate NADPH. Lys108, Gly137, and Ser139 together coordinate sn-glycerol 3-phosphate. Position 141 (Ala141) interacts with NADPH. Sn-glycerol 3-phosphate contacts are provided by Lys192, Asp245, Ser255, Arg256, and Asn257. The Proton acceptor role is filled by Lys192. An NADPH-binding site is contributed by Arg256. Residues Val280 and Glu282 each coordinate NADPH.

The protein belongs to the NAD-dependent glycerol-3-phosphate dehydrogenase family.

The protein resides in the cytoplasm. It catalyses the reaction sn-glycerol 3-phosphate + NAD(+) = dihydroxyacetone phosphate + NADH + H(+). The enzyme catalyses sn-glycerol 3-phosphate + NADP(+) = dihydroxyacetone phosphate + NADPH + H(+). The protein operates within membrane lipid metabolism; glycerophospholipid metabolism. Functionally, catalyzes the reduction of the glycolytic intermediate dihydroxyacetone phosphate (DHAP) to sn-glycerol 3-phosphate (G3P), the key precursor for phospholipid synthesis. The chain is Glycerol-3-phosphate dehydrogenase [NAD(P)+] from Burkholderia cenocepacia (strain ATCC BAA-245 / DSM 16553 / LMG 16656 / NCTC 13227 / J2315 / CF5610) (Burkholderia cepacia (strain J2315)).